A 258-amino-acid chain; its full sequence is UDP-2,3-diacylglucosamine hydrolase (258 aa).

Mn(2+) is bound by residues Asp-15, His-17, Asp-48, Asn-88, and His-123. 88-89 contacts substrate; the sequence is NR. Positions 131, 169, 173, 176, and 204 each coordinate substrate. The Mn(2+) site is built by His-204 and His-206.

It belongs to the LpxH family. It depends on Mn(2+) as a cofactor.

The protein resides in the cell inner membrane. The catalysed reaction is UDP-2-N,3-O-bis[(3R)-3-hydroxytetradecanoyl]-alpha-D-glucosamine + H2O = 2-N,3-O-bis[(3R)-3-hydroxytetradecanoyl]-alpha-D-glucosaminyl 1-phosphate + UMP + 2 H(+). It participates in glycolipid biosynthesis; lipid IV(A) biosynthesis; lipid IV(A) from (3R)-3-hydroxytetradecanoyl-[acyl-carrier-protein] and UDP-N-acetyl-alpha-D-glucosamine: step 4/6. In terms of biological role, hydrolyzes the pyrophosphate bond of UDP-2,3-diacylglucosamine to yield 2,3-diacylglucosamine 1-phosphate (lipid X) and UMP by catalyzing the attack of water at the alpha-P atom. Involved in the biosynthesis of lipid A, a phosphorylated glycolipid that anchors the lipopolysaccharide to the outer membrane of the cell. The chain is UDP-2,3-diacylglucosamine hydrolase from Bordetella pertussis (strain Tohama I / ATCC BAA-589 / NCTC 13251).